We begin with the raw amino-acid sequence, 80 residues long: uncharacterized protein (80 aa).

An N-terminal signal peptide occupies residues 1 to 20; that stretch reads MVAADHRALGSNKSYPASQT. The tract at residues 1–21 is disordered; it reads MVAADHRALGSNKSYPASQTA. Polar residues predominate over residues 11–21; that stretch reads SNKSYPASQTA.

This is an uncharacterized protein from Mycobacterium tuberculosis (strain CDC 1551 / Oshkosh).